The chain runs to 208 residues: Methylthioribulose-1-phosphate dehydratase (208 aa).

Zn(2+) is bound by residues histidine 96 and histidine 98.

It belongs to the aldolase class II family. MtnB subfamily. Requires Zn(2+) as cofactor.

It carries out the reaction 5-(methylsulfanyl)-D-ribulose 1-phosphate = 5-methylsulfanyl-2,3-dioxopentyl phosphate + H2O. It participates in amino-acid biosynthesis; L-methionine biosynthesis via salvage pathway; L-methionine from S-methyl-5-thio-alpha-D-ribose 1-phosphate: step 2/6. In terms of biological role, catalyzes the dehydration of methylthioribulose-1-phosphate (MTRu-1-P) into 2,3-diketo-5-methylthiopentyl-1-phosphate (DK-MTP-1-P). The protein is Methylthioribulose-1-phosphate dehydratase of Pseudomonas fluorescens (strain Pf0-1).